A 414-amino-acid chain; its full sequence is CinA-like protein (414 aa).

The protein belongs to the CinA family.

This Koribacter versatilis (strain Ellin345) protein is CinA-like protein.